A 1045-amino-acid chain; its full sequence is Suppression of tumorigenicity 18 protein (1045 aa).

Disordered stretches follow at residues 38 to 90 (KKRR…NDHA), 158 to 228 (KAES…YNRK), and 340 to 364 (PRVT…RREA). A compositionally biased stretch (basic residues) spans 52 to 63 (NKRKSLLMKPRH). 2 stretches are compositionally biased toward basic and acidic residues: residues 69-90 (GCKE…NDHA) and 159-177 (AESD…NGRD). 6 consecutive CCHHC-type zinc fingers follow at residues 357 to 400 (PRPE…PLEI), 401 to 444 (LAMH…KLAM), 713 to 756 (RDLK…LKSL), 757 to 800 (MAAN…GIKM), 805 to 848 (EEKE…QKEN), and 858 to 901 (KLNK…IKKV). Residues Cys-366, Cys-371, His-384, Cys-390, Cys-410, Cys-415, His-428, Cys-434, Cys-722, Cys-727, His-740, Cys-746, Cys-766, Cys-771, His-784, Cys-790, Cys-814, Cys-819, His-832, Cys-838, Cys-867, Cys-872, His-885, and Cys-891 each contribute to the Zn(2+) site. Residues 918–987 (IDGDEEIRHL…KELAGLSQAL (70 aa)) are a coiled coil.

This sequence belongs to the MYT1 family.

The protein localises to the nucleus. Its function is as follows. Repressor that binds to DNA sequences containing a bipartite element consisting of a direct repeat of the sequence 5'-AAAGTTT-3' separated by 2-9 nucleotides. Represses basal transcription activity from target promoters. The protein is Suppression of tumorigenicity 18 protein (St18) of Mus musculus (Mouse).